Here is a 120-residue protein sequence, read N- to C-terminus: Putative cysteine proteinase inhibitor 11 (120 aa).

Residues 1–24 (MARHPGLLLILLAAVAAVATTSRA) form the signal peptide. Positions 73–77 (QVVQG) match the Secondary area of contact motif.

This sequence belongs to the cystatin family. Phytocystatin subfamily.

The protein resides in the secreted. In terms of biological role, specific inhibitor of cysteine proteinases. Probably involved in the regulation of endogenous processes and in defense against pests and pathogens. The polypeptide is Putative cysteine proteinase inhibitor 11 (Oryza sativa subsp. japonica (Rice)).